The primary structure comprises 30 residues: Thylakoid lumenal 17 kDa protein (30 aa).

The protein resides in the plastid. It localises to the chloroplast thylakoid lumen. This is Thylakoid lumenal 17 kDa protein from Spinacia oleracea (Spinach).